The following is a 397-amino-acid chain: GDP-mannose transporter 1 (397 aa).

Residues 1 to 57 (MSKPFVPTPNISRPATPSSLDYGKDEASSTLLRDMGERGDRERKDREERDKKEAMPS) form a disordered region. Topologically, residues 1–61 (MSKPFVPTPN…KEAMPSGQDQ (61 aa)) are cytoplasmic. Positions 9-19 (PNISRPATPSS) are enriched in polar residues. Positions 34 to 54 (DMGERGDRERKDREERDKKEA) are enriched in basic and acidic residues. A helical transmembrane segment spans residues 62–82 (VLPILSYCAASIMMTVVNKYV). Residues 83–87 (VSGAN) lie on the Lumenal side of the membrane. Residue asparagine 87 is glycosylated (N-linked (GlcNAc...) asparagine). The helical transmembrane segment at 88 to 108 (FTMTFLLLAIQSSVCVLAVTT) threads the bilayer. At 109–124 (VKKLGFISFRDFDKND) the chain is on the cytoplasmic side. Residues 125 to 142 (AKAWWPISTLLVAVIYTG) traverse the membrane as a helical segment. Residues 143 to 145 (SKA) are Lumenal-facing. A helical transmembrane segment spans residues 146-168 (LQFLSIPVYTIFKNLTIILIAYG). Residues 169 to 174 (EVFMFN) lie on the Cytoplasmic side of the membrane. Residues 175–197 (GAVSGLTLCSFALMVGSSIIAAW) form a helical membrane-spanning segment. Residues 198–228 (SDITSVWNKEPELDPITGLEITVGPVSTIGG) lie on the Lumenal side of the membrane. The chain crosses the membrane as a helical span at residues 229-249 (LNAGYIWMALNCFVSAAYVLF). The Cytoplasmic portion of the chain corresponds to 250–272 (MRKRIKVTGFKDWDSMYYNNLLS). Residues 273–293 (IPILVVFSLVIEDWGSESLAL) form a helical membrane-spanning segment. Residues 294-300 (NFPASNR) lie on the Lumenal side of the membrane. The chain crosses the membrane as a helical span at residues 301 to 321 (VLLLSAMAFSGAAAVFISYST). The Cytoplasmic segment spans residues 322-332 (AWCVRITGSTT). The helical transmembrane segment at 333 to 353 (YSMVGALNKLPVAASGILFFG) threads the bilayer. Topologically, residues 354–355 (DP) are lumenal. The helical transmembrane segment at 356–376 (ANFGNISAIAVGGVAGVVYAV) threads the bilayer. At 377 to 397 (AKTNQAKVEKARQARAAGGRP) the chain is on the cytoplasmic side.

This sequence belongs to the TPT transporter family. SLC35D subfamily. As to quaternary structure, homooligomer.

Its subcellular location is the golgi apparatus membrane. It is found in the cytoplasmic vesicle membrane. The protein localises to the endoplasmic reticulum membrane. Its function is as follows. Involved in the import of GDP-mannose from the cytoplasm into the Golgi lumen. Involved in capsule synthesis. In Cryptococcus neoformans var. neoformans serotype D (strain B-3501A) (Filobasidiella neoformans), this protein is GDP-mannose transporter 1 (GMT1).